Consider the following 629-residue polypeptide: tRNA uridine 5-carboxymethylaminomethyl modification enzyme MnmG (629 aa).

Residues 13 to 18 (GGGHAG), V125, and S180 contribute to the FAD site. 273–287 (GPRYCPSIEDKVMRF) lines the NAD(+) pocket. Position 370 (Q370) interacts with FAD.

The protein belongs to the MnmG family. As to quaternary structure, homodimer. Heterotetramer of two MnmE and two MnmG subunits. FAD serves as cofactor.

It is found in the cytoplasm. NAD-binding protein involved in the addition of a carboxymethylaminomethyl (cmnm) group at the wobble position (U34) of certain tRNAs, forming tRNA-cmnm(5)s(2)U34. In Salmonella dublin (strain CT_02021853), this protein is tRNA uridine 5-carboxymethylaminomethyl modification enzyme MnmG.